The chain runs to 202 residues: Small ribosomal subunit protein uS4c (202 aa).

In terms of domain architecture, S4 RNA-binding spans 90 to 158 (MRLDNIIFRL…ITKNIELSQK (69 aa)).

The protein belongs to the universal ribosomal protein uS4 family. In terms of assembly, part of the 30S ribosomal subunit. Contacts protein S5. The interaction surface between S4 and S5 is involved in control of translational fidelity.

The protein localises to the plastid. It localises to the chloroplast. Its function is as follows. One of the primary rRNA binding proteins, it binds directly to 16S rRNA where it nucleates assembly of the body of the 30S subunit. With S5 and S12 plays an important role in translational accuracy. This is Small ribosomal subunit protein uS4c (rps4) from Marchantia romanica (Liverwort).